Reading from the N-terminus, the 302-residue chain is Recombination-associated protein RdgC (302 aa).

It belongs to the RdgC family.

The protein localises to the cytoplasm. The protein resides in the nucleoid. In terms of biological role, may be involved in recombination. This chain is Recombination-associated protein RdgC, found in Xylella fastidiosa (strain 9a5c).